A 62-amino-acid chain; its full sequence is Alpha-conotoxin ViIA (62 aa).

The N-terminal stretch at 1–18 (MGMRMMFVVFLLVVFASS) is a signal peptide. Positions 19 to 45 (VTLDRASYGRYASPVDRASALIAQAIL) are excised as a propeptide. Disulfide bonds link Cys48–Cys54 and Cys49–Cys61.

This sequence belongs to the conotoxin A superfamily. In terms of processing, the toxin is inactive on the alpha-3-beta-2 nAChR when the disulfide bond connectivity is C1-C4 and C2-C3 (ViIA-I) (IC(50)&gt;10000 nM). Expressed by the venom duct.

It is found in the secreted. Its function is as follows. Alpha-conotoxins act on postsynaptic membranes, they bind to the nicotinic acetylcholine receptors (nAChR) and thus inhibit them. This toxin selectively inhibits nicotinic acetylcholine receptor (nAChR) alpha-3-beta-2 subtype (IC(50)=845.5 nM). This Conus virgo (Virgin cone) protein is Alpha-conotoxin ViIA.